Here is a 218-residue protein sequence, read N- to C-terminus: Redox-sensing transcriptional repressor Rex (218 aa).

Residues 18–57 constitute a DNA-binding region (H-T-H motif); that stretch reads LYYRFIQSLHASGKQRVSSAELSEAVKVDSATIRRDFSYF. Position 92–97 (92–97) interacts with NAD(+); that stretch reads GVGHLG.

It belongs to the transcriptional regulatory Rex family. In terms of assembly, homodimer.

The protein localises to the cytoplasm. Functionally, modulates transcription in response to changes in cellular NADH/NAD(+) redox state. The sequence is that of Redox-sensing transcriptional repressor Rex from Exiguobacterium sp. (strain ATCC BAA-1283 / AT1b).